Reading from the N-terminus, the 778-residue chain is Mitochondrial intermediate peptidase (778 aa).

The transit peptide at 1 to 37 directs the protein to the mitochondrion; sequence MIRTVTRPRQWQRWVYSSCLLQRAVPPAAARQQPRFT. His557 contributes to the Zn(2+) binding site. Glu558 is a catalytic residue. Residues His561 and His564 each contribute to the Zn(2+) site.

It belongs to the peptidase M3 family. Zn(2+) is required as a cofactor.

It localises to the mitochondrion matrix. It carries out the reaction Release of an N-terminal octapeptide as second stage of processing of some proteins imported into the mitochondrion.. Functionally, cleaves proteins, imported into the mitochondrion, to their mature size. While most mitochondrial precursor proteins are processed to the mature form in one step by mitochondrial processing peptidase (MPP), the sequential cleavage by MIP of an octapeptide after initial processing by MPP is a required step for a subgroup of nuclear-encoded precursor proteins destined for the matrix or the inner membrane. The sequence is that of Mitochondrial intermediate peptidase (OCT1) from Chaetomium globosum (strain ATCC 6205 / CBS 148.51 / DSM 1962 / NBRC 6347 / NRRL 1970) (Soil fungus).